The sequence spans 892 residues: Alpha-actinin-1 (892 aa).

M1 is subject to N-acetylmethionine. Residues 1–247 form an actin-binding region; sequence MDHYDSQQTN…IMTYVSSFYH (247 aa). S6 is subject to Phosphoserine. Position 12 is a phosphotyrosine; by FAK1 (Y12). Calponin-homology (CH) domains are found at residues 31–135 and 144–250; these read KQQR…LRFA and TSAK…HAFS. N6-acetyllysine occurs at positions 95 and 195. 4 Spectrin repeats span residues 274-384, 394-499, 509-620, and 630-733; these read QLME…WLLN, HLAE…ALER, QLYL…ALTE, and RLRK…EVEN. The interaction with DDN stretch occupies residues 274–733; sequence QLMEDYEKLA…IARTINEVEN (460 aa). Position 471 is a phosphoserine (S471). N6-acetyllysine is present on K676. S677 carries the post-translational modification Phosphoserine. EF-hand domains follow at residues 746 to 781 and 787 to 822; these read EQMN…LGYD and QGEA…ETAD. The Ca(2+) site is built by D759, D761, S763, T765, and E770. The residue at position 890 (S890) is a Phosphoserine.

It belongs to the alpha-actinin family. Homodimer; antiparallel. Interacts with MYOZ2, TTID and LPP. Interacts with DDN. Interacts with PSD. Interacts with MICALL2. Interacts with DNM2 and CTTN. Interacts with PDLIM1. Interacts with PDLIM2. Interacts with PDLIM4 (via PDZ domain). Interacts with IGSF8.

It is found in the cytoplasm. It localises to the cytoskeleton. Its subcellular location is the myofibril. The protein resides in the sarcomere. The protein localises to the z line. It is found in the cell membrane. It localises to the cell junction. Its subcellular location is the cell projection. The protein resides in the ruffle. Its function is as follows. F-actin cross-linking protein which is thought to anchor actin to a variety of intracellular structures. Association with IGSF8 regulates the immune synapse formation and is required for efficient T-cell activation. This Homo sapiens (Human) protein is Alpha-actinin-1 (ACTN1).